The chain runs to 36 residues: Phosphoglycerate kinase, chloroplastic (36 aa).

3 residues coordinate (2R)-3-phosphoglycerate: Ala-22, Asp-23, and Asn-25.

It belongs to the phosphoglycerate kinase family. As to quaternary structure, monomer. The cofactor is Mg(2+).

It localises to the plastid. Its subcellular location is the chloroplast. It carries out the reaction (2R)-3-phosphoglycerate + ATP = (2R)-3-phospho-glyceroyl phosphate + ADP. The protein operates within carbohydrate biosynthesis; Calvin cycle. This Scenedesmus fuscus (Green alga) protein is Phosphoglycerate kinase, chloroplastic.